Here is a 244-residue protein sequence, read N- to C-terminus: Ribosomal RNA small subunit methyltransferase NEP1 (244 aa).

The disordered stretch occupies residues 1–34; sequence MAAPSDGFKPRERSGGEQAQDWDALPPKRPRLGA. Alanine 2 is modified (N-acetylalanine). A phosphoserine mark is found at serine 5 and serine 14. S-adenosyl-L-methionine-binding positions include threonine 176, glycine 201, glycine 206, and 219-224; that span reads ISNYPL.

Belongs to the class IV-like SAM-binding methyltransferase superfamily. RNA methyltransferase NEP1 family. In terms of assembly, homodimer. Part of the small subunit (SSU) processome, composed of more than 70 proteins and the RNA chaperone small nucleolar RNA (snoRNA) U3.

The protein localises to the nucleus. It localises to the nucleolus. The enzyme catalyses pseudouridine(1248) in human 18S rRNA + S-adenosyl-L-methionine = N(1)-methylpseudouridine(1248) in human 18S rRNA + S-adenosyl-L-homocysteine + H(+). Its function is as follows. S-adenosyl-L-methionine-dependent pseudouridine N(1)-methyltransferase that methylates pseudouridine at position 1248 (Psi1248) in 18S rRNA. Involved the biosynthesis of the hypermodified N1-methyl-N3-(3-amino-3-carboxypropyl) pseudouridine (m1acp3-Psi) conserved in eukaryotic 18S rRNA. Is not able to methylate uridine at this position. Also has an essential role in 40S ribosomal subunit biogenesis independent on its methyltransferase activity, facilitating the incorporation of ribosomal protein S19 during the formation of pre-ribosomes. Part of the small subunit (SSU) processome, first precursor of the small eukaryotic ribosomal subunit. During the assembly of the SSU processome in the nucleolus, many ribosome biogenesis factors, an RNA chaperone and ribosomal proteins associate with the nascent pre-rRNA and work in concert to generate RNA folding, modifications, rearrangements and cleavage as well as targeted degradation of pre-ribosomal RNA by the RNA exosome. The sequence is that of Ribosomal RNA small subunit methyltransferase NEP1 from Homo sapiens (Human).